Consider the following 340-residue polypeptide: MGEMEQLKQEAEQLKKQIADARKACADITLAELVSGLEVVGRVQMRTRRTLRGHLAKIYAMHWATDSKLLVSASQDGKLIVWDTYTTNKVHAIPLRSSWVMTCAYAPSGNFVACGGLDNMCSIYSLKSREGNVKVSRELSAHTGYLSCCRFLDDNNIVTSSGDTTCALWDIETGQQKTVFVGHTGDCMSLAVSPDYKLFISGACDASAKLWDVREGTCRQTFTGHESDINAICFFPNGEAICTGSDDASCRLFDLRADQELTAYSHESIICGITSVAFSLSGRLLFAGYDDFNCNVWDSLKCERVGVLSGHDNRVSCLGVTADGMAVATGSWDSFLKIWN.

7 WD repeats span residues 53–83 (GHLA…IVWD), 95–125 (LRSS…SIYS), 141–170 (AHTG…ALWD), 182–212 (GHTG…KLWD), 224–254 (GHES…RLFD), 268–298 (SIIC…NVWD), and 310–340 (GHDN…KIWN).

The protein belongs to the WD repeat G protein beta family. G proteins are composed of 3 units, alpha, beta and gamma. Interacts with RASD2. As to expression, expressed at a high level in the heart and at a much lower level in the brain.

Guanine nucleotide-binding proteins (G proteins) are involved as a modulator or transducer in various transmembrane signaling systems. The beta and gamma chains are required for the GTPase activity, for replacement of GDP by GTP, and for G protein-effector interaction. This Rattus norvegicus (Rat) protein is Guanine nucleotide-binding protein G(I)/G(S)/G(T) subunit beta-3 (Gnb3).